Here is a 193-residue protein sequence, read N- to C-terminus: Putative F-box protein At1g31072 (193 aa).

Residues 4–53 (EKTLDSIPIDVFLDIFSRLPAKSVGRSCCVSNRWASILGSQDFKELFLTM) form the F-box domain.

The polypeptide is Putative F-box protein At1g31072 (Arabidopsis thaliana (Mouse-ear cress)).